We begin with the raw amino-acid sequence, 324 residues long: Phospho-N-acetylmuramoyl-pentapeptide-transferase (324 aa).

The next 10 membrane-spanning stretches (helical) occupy residues G5–I25, P52–I72, L77–L97, L117–D137, I147–S167, L176–V196, A202–A222, V227–L247, L253–I273, and V302–V322.

The protein belongs to the glycosyltransferase 4 family. MraY subfamily. Mg(2+) is required as a cofactor.

The protein resides in the cell membrane. It catalyses the reaction UDP-N-acetyl-alpha-D-muramoyl-L-alanyl-gamma-D-glutamyl-meso-2,6-diaminopimeloyl-D-alanyl-D-alanine + di-trans,octa-cis-undecaprenyl phosphate = di-trans,octa-cis-undecaprenyl diphospho-N-acetyl-alpha-D-muramoyl-L-alanyl-D-glutamyl-meso-2,6-diaminopimeloyl-D-alanyl-D-alanine + UMP. It functions in the pathway cell wall biogenesis; peptidoglycan biosynthesis. In terms of biological role, catalyzes the initial step of the lipid cycle reactions in the biosynthesis of the cell wall peptidoglycan: transfers peptidoglycan precursor phospho-MurNAc-pentapeptide from UDP-MurNAc-pentapeptide onto the lipid carrier undecaprenyl phosphate, yielding undecaprenyl-pyrophosphoryl-MurNAc-pentapeptide, known as lipid I. This Bacillus cytotoxicus (strain DSM 22905 / CIP 110041 / 391-98 / NVH 391-98) protein is Phospho-N-acetylmuramoyl-pentapeptide-transferase.